Here is a 528-residue protein sequence, read N- to C-terminus: CTD kinase subunit alpha (528 aa).

Positions 1–15 (MSYNNGNTYSKSYSR) are enriched in polar residues. Positions 1 to 148 (MSYNNGNTYS…NTSNDIKNGY (148 aa)) are disordered. Ser-14 is modified (phosphoserine; by autocatalysis). A Nuclear localization signal motif is present at residues 37–44 (PPKRIRTD). Residues 45 to 103 (SGYQSNMDNISSHRVNSNDQPGHTKSRGNNNLSRYNDTSFQTSSRYQGSRYNNNNTSYE) are compositionally biased toward polar residues. The span at 104–118 (NRPKSIKRDETKAEF) shows a compositional bias: basic and acidic residues. A compositionally biased stretch (polar residues) spans 134–144 (YNNSSNTSNDI). The region spanning 183–469 (YLRIMQVGEG…ATEALQSDYF (287 aa)) is the Protein kinase domain. Residues 189 to 197 (VGEGTYGKV) and Lys-212 contribute to the ATP site. The active-site Proton acceptor is Asp-306. Thr-338 is subject to Phosphothreonine. Positions 497 to 528 (QKRPNILSTNTNNKGNGNSNNNNNNNNDDDDK) are disordered. Residues 504–522 (STNTNNKGNGNSNNNNNNN) show a composition bias toward low complexity.

Belongs to the protein kinase superfamily. CMGC Ser/Thr protein kinase family. CDC2/CDKX subfamily. As to quaternary structure, CTDK-I consists of three subunits, CTK1, CTK2 and CTK3 (also called alpha, beta and gamma). Interacts directly with the CTK2 and CTK3 subunits, this interaction is required for kinase activity. Interacts with RNA polymerase I. Interacts with SNF1, but only at low glucose concentrations. Interacts with translating ribosomes. Phosphorylated on Thr-338 by CAK1. Phosphorylation is essential for the elevated CTD Ser-2 phosphorylation and required to activate transcription of stationary-phase genes during the diauxic shift.

The protein resides in the nucleus. It localises to the nucleolus. It is found in the cytoplasm. The enzyme catalyses [DNA-directed RNA polymerase] + ATP = phospho-[DNA-directed RNA polymerase] + ADP + H(+). In terms of biological role, catalytic subunit of the CTDK-I complex, which hyperphosphorylates the C-terminal heptapeptide repeat domain (CTD) of the largest RNA polymerase II subunit. CTDK-I phosphorylates 'Ser-5' if the CTD substrate is not phosphorylated at 'Ser-5', but will phosphorylate 'Ser-2' of a CTD substrate if 'Ser-5' is already phosphorylated. CTDK-I is also more reactive toward substrates that are prephosphorylated at 'Ser-2' or 'Ser-5' compared with an unphosphorylated CTD substrate, therefore efficiently creating doubly phosphorylated CTD repeats. Involved in RNA polymerase II transcriptional elongation, and through PTI1, pre-mRNA 3'-end processing. Participates in both positive and negative regulation of CTD phosphorylation. Required for DNA damage induced transcription, including the expression of the RNR genes, and reprogramming of gene expression upon amino acid starvation. Required for SET2 mediated H3K36 methylation. Also regulates H3K4 methylation. Controls the maintenance of suppressive chromatin in the coding regions of genes by both promoting H3K36 methylation, which leads to histone deacetylation, and catalyzing phosphorylation of the CTD required to localize H3K4 chromatin modification specifically to the 5' ends of genes, thereby creating a boundary for H3K4 methylation that prevents a mark associated with transcriptional initiation from spreading into the bodies of genes. Involved in RNA polymerase I transcription. Involved in telomere maintenance. Acts together with SNF1 to induce GSY2 transcription in response to glucose limitation. Involved in the adaptation to alternative carbon sources, including galactose, glycerol and ethanol, but not raffinose. Required for the integrity of the rDNA locus. Functions in translation elongation by enhancing decoding fidelity. Needed for translational accuracy by phosphorylating RPS2. The sequence is that of CTD kinase subunit alpha (CTK1) from Saccharomyces cerevisiae (strain ATCC 204508 / S288c) (Baker's yeast).